A 103-amino-acid chain; its full sequence is MYAVIVSGGKQHRVKEGETLKLEKLEVETGGSVEFDRVLLVANGDDVKVGAPVVEGAKVTAEVVSHGRHDKVNIIKFRRRKHHMKRQGHRQWFTEVKITGIQG.

Belongs to the bacterial ribosomal protein bL21 family. As to quaternary structure, part of the 50S ribosomal subunit. Contacts protein L20.

In terms of biological role, this protein binds to 23S rRNA in the presence of protein L20. In Marinobacter nauticus (strain ATCC 700491 / DSM 11845 / VT8) (Marinobacter aquaeolei), this protein is Large ribosomal subunit protein bL21.